The chain runs to 481 residues: Aspartyl/glutamyl-tRNA(Asn/Gln) amidotransferase subunit B (481 aa).

The protein belongs to the GatB/GatE family. GatB subfamily. As to quaternary structure, heterotrimer of A, B and C subunits.

The catalysed reaction is L-glutamyl-tRNA(Gln) + L-glutamine + ATP + H2O = L-glutaminyl-tRNA(Gln) + L-glutamate + ADP + phosphate + H(+). It catalyses the reaction L-aspartyl-tRNA(Asn) + L-glutamine + ATP + H2O = L-asparaginyl-tRNA(Asn) + L-glutamate + ADP + phosphate + 2 H(+). In terms of biological role, allows the formation of correctly charged Asn-tRNA(Asn) or Gln-tRNA(Gln) through the transamidation of misacylated Asp-tRNA(Asn) or Glu-tRNA(Gln) in organisms which lack either or both of asparaginyl-tRNA or glutaminyl-tRNA synthetases. The reaction takes place in the presence of glutamine and ATP through an activated phospho-Asp-tRNA(Asn) or phospho-Glu-tRNA(Gln). The chain is Aspartyl/glutamyl-tRNA(Asn/Gln) amidotransferase subunit B from Marinomonas sp. (strain MWYL1).